The primary structure comprises 236 residues: Ribonuclease 3 (236 aa).

An RNase III domain is found at 8-130 (FRRLSQALDY…TFAAVSFDAD (123 aa)). E43 serves as a coordination point for Mg(2+). The active site involves D47. Mg(2+) is bound by residues D116 and E119. Residue E119 is part of the active site. A DRBM domain is found at 157–227 (DAKTRLQEAL…AEAALTLLEQ (71 aa)).

It belongs to the ribonuclease III family. As to quaternary structure, homodimer. Requires Mg(2+) as cofactor.

The protein localises to the cytoplasm. It carries out the reaction Endonucleolytic cleavage to 5'-phosphomonoester.. Its function is as follows. Digests double-stranded RNA. Involved in the processing of primary rRNA transcript to yield the immediate precursors to the large and small rRNAs (23S and 16S). Processes some mRNAs, and tRNAs when they are encoded in the rRNA operon. Processes pre-crRNA and tracrRNA of type II CRISPR loci if present in the organism. This is Ribonuclease 3 from Chromobacterium violaceum (strain ATCC 12472 / DSM 30191 / JCM 1249 / CCUG 213 / NBRC 12614 / NCIMB 9131 / NCTC 9757 / MK).